A 432-amino-acid polypeptide reads, in one-letter code: MTLWVLGLNHQTAPMELRERASFVGDALPRALDSLRNLPNVNEAALLSTCNRTELYAETTNAQMLLNWLEQHRPGLQNHLYQYRDAAAVRHLFRVATGLDSMVLGESQILGQVKDSWSMARTHGTLGNTLDRLFQHSFSVAKHARTNTRIGTNPVSIASTAVRLAQDAFSPLNESTVLLIGAGETIQLAAKHLSEGRVQRLLIANRTHAKAQMLASQHGGYALPLTELNLHLAEADIIFSATAAPTPIVTQSNVESALHIRKRKPILLFDLAIPRDIETEVGTLTDAYLYTIDDLERAVEENRHSRREAAETAEAIIELQVKRYMDTLQAQAHQAPLRRLRTFGTTTRDELLTRARRQLANGRPAEEVLEQLAHGLTNRLLHPPTAALREAALANNTELVRAAEQLFPEKPGYHHPTLQTTIVKTDETDPAS.

Substrate is bound by residues 49–52, Ser-101, 106–108, and Gln-112; these read TCNR and ESQ. Cys-50 acts as the Nucleophile in catalysis. NADP(+) is bound at residue 181 to 186; the sequence is GAGETI. The tract at residues 410–432 is disordered; the sequence is KPGYHHPTLQTTIVKTDETDPAS.

The protein belongs to the glutamyl-tRNA reductase family. In terms of assembly, homodimer.

It carries out the reaction (S)-4-amino-5-oxopentanoate + tRNA(Glu) + NADP(+) = L-glutamyl-tRNA(Glu) + NADPH + H(+). Its pathway is porphyrin-containing compound metabolism; protoporphyrin-IX biosynthesis; 5-aminolevulinate from L-glutamyl-tRNA(Glu): step 1/2. In terms of biological role, catalyzes the NADPH-dependent reduction of glutamyl-tRNA(Glu) to glutamate 1-semialdehyde (GSA). This chain is Glutamyl-tRNA reductase, found in Xylella fastidiosa (strain M23).